A 1187-amino-acid chain; its full sequence is uncharacterized protein (1187 aa).

The segment covering 38–57 (KNNQDIPTSNTNISPKPISQ) has biased composition (polar residues). 8 disordered regions span residues 38-127 (KNNQ…NSPT), 189-215 (ISRS…IHLN), 248-287 (TQPP…SQLQ), 358-415 (NNNS…NSNS), 443-490 (FPNN…INNN), 536-689 (QFPF…SSLN), 752-840 (SINN…NKSI), and 1079-1187 (HNNN…NLQK). Composition is skewed to low complexity over residues 71-84 (KPIV…STLI), 104-124 (PSSS…SIPN), 190-215 (SRSS…IHLN), and 248-274 (TQPP…QAPH). Residues 443–455 (FPNNTDENYPSDH) show a composition bias toward polar residues. 6 stretches are compositionally biased toward low complexity: residues 458–490 (NDNN…INNN), 543–570 (TTES…SSSA), 585–653 (INNL…SNIN), 662–689 (PNSP…SSLN), 752–790 (SINN…TTNN), and 797–809 (NYKI…NIDN). Acidic residues predominate over residues 815–832 (NDDDNDDDDDDDVDDNDD). Composition is skewed to low complexity over residues 1079–1149 (HNNN…PSNN) and 1156–1174 (KNNN…NNTN).

This is an uncharacterized protein from Dictyostelium discoideum (Social amoeba).